Consider the following 90-residue polypeptide: Probable Fe(2+)-trafficking protein (90 aa).

It belongs to the Fe(2+)-trafficking protein family.

Could be a mediator in iron transactions between iron acquisition and iron-requiring processes, such as synthesis and/or repair of Fe-S clusters in biosynthetic enzymes. The polypeptide is Probable Fe(2+)-trafficking protein (Thioalkalivibrio sulfidiphilus (strain HL-EbGR7)).